An 83-amino-acid chain; its full sequence is Cytochrome b559 subunit alpha (83 aa).

A helical transmembrane segment spans residues 21-35 (VIHSITIPSLFIAGW). Residue His23 participates in heme binding.

This sequence belongs to the PsbE/PsbF family. Heterodimer of an alpha subunit and a beta subunit. PSII is composed of 1 copy each of membrane proteins PsbA, PsbB, PsbC, PsbD, PsbE, PsbF, PsbH, PsbI, PsbJ, PsbK, PsbL, PsbM, PsbT, PsbX, PsbY, PsbZ, Psb30/Ycf12, at least 3 peripheral proteins of the oxygen-evolving complex and a large number of cofactors. It forms dimeric complexes. Heme b serves as cofactor.

It is found in the plastid. It localises to the chloroplast thylakoid membrane. Functionally, this b-type cytochrome is tightly associated with the reaction center of photosystem II (PSII). PSII is a light-driven water:plastoquinone oxidoreductase that uses light energy to abstract electrons from H(2)O, generating O(2) and a proton gradient subsequently used for ATP formation. It consists of a core antenna complex that captures photons, and an electron transfer chain that converts photonic excitation into a charge separation. The sequence is that of Cytochrome b559 subunit alpha from Mesembryanthemum crystallinum (Common ice plant).